The following is a 320-amino-acid chain: Olfactory receptor 13C8 (320 aa).

The Extracellular segment spans residues 1–25; sequence MERTNDSTSTEFFLVGLSAHPKLQT. N5 carries N-linked (GlcNAc...) asparagine glycosylation. A helical transmembrane segment spans residues 26–46; that stretch reads VFFVLILWMYLMILLGNGVLI. Residues 47–54 are Cytoplasmic-facing; the sequence is SVIIFDSH. A helical transmembrane segment spans residues 55–75; sequence LHTPMYFFLCNLSFLDVCYTS. The Extracellular segment spans residues 76-99; the sequence is SSVPLILASFLAVKKKVSFSGCMV. C97 and C189 are disulfide-bonded. Residues 100–120 form a helical membrane-spanning segment; sequence QMFISFAMGATECMILGTMAL. The Cytoplasmic segment spans residues 121–139; the sequence is DRYVAICYPLRYPVIMSKG. A helical transmembrane segment spans residues 140–160; that stretch reads AYVAMAAGSWVTGLVDSVVQT. The Extracellular portion of the chain corresponds to 161–197; sequence AFAMQLPFCANNVIKHFVCEILAILKLACADISINVI. Residues 198-217 traverse the membrane as a helical segment; sequence SMTGSNLIVLVIPLLVISIS. Topologically, residues 218-237 are cytoplasmic; the sequence is YIFIVATILRIPSTEGKHKA. A helical membrane pass occupies residues 238-258; it reads FSTCSAHLTVVIIFYGTIFFM. Over 259–277 the chain is Extracellular; it reads YAKPESKASVDSGNEDIIE. Residues 278–298 traverse the membrane as a helical segment; the sequence is ALISLFYGVMTPMLNPLIYSL. Over 299-320 the chain is Cytoplasmic; the sequence is RNKDVKAAVKNILCRKNFSDGK.

This sequence belongs to the G-protein coupled receptor 1 family.

It localises to the cell membrane. Functionally, odorant receptor. The polypeptide is Olfactory receptor 13C8 (OR13C8) (Homo sapiens (Human)).